The following is a 483-amino-acid chain: Dual specificity protein kinase CLK1 (483 aa).

Residues 1–49 are disordered; it reads MRHSKRTYCPDWDERDWDYGTWRSSSSHKRKKRSHSSAREQKRCRYDHS. Residues 26-36 show a composition bias toward basic residues; it reads SSHKRKKRSHS. The Nuclear localization signal signature appears at 29–33; that stretch reads KRKKR. The segment covering 37-49 has biased composition (basic and acidic residues); sequence SAREQKRCRYDHS. Residue S61 is modified to Phosphoserine. A compositionally biased stretch (low complexity) spans 84–111; sequence EPGHPYGEPGSRYQMHSSKSSGRSGRSS. Positions 84-146 are disordered; it reads EPGHPYGEPG…SRSVEDDEEG (63 aa). The span at 112–137 shows a compositional bias: basic residues; it reads YKSKHRSRHHTSQHHSHGKSHRRKRS. S139 is subject to Phosphoserine. Positions 160 to 476 constitute a Protein kinase domain; that stretch reads YEIVDTLGEG…LKEALKHPFF (317 aa). ATP-binding positions include 166–174 and K190; that span reads LGEGAFGKV. The active-site Proton acceptor is D287.

Belongs to the protein kinase superfamily. CMGC Ser/Thr protein kinase family. Lammer subfamily. Interacts with PPIG and UBL5. Autophosphorylates on all three types of residues.

It localises to the nucleus. The catalysed reaction is L-seryl-[protein] + ATP = O-phospho-L-seryl-[protein] + ADP + H(+). The enzyme catalyses L-threonyl-[protein] + ATP = O-phospho-L-threonyl-[protein] + ADP + H(+). It catalyses the reaction L-tyrosyl-[protein] + ATP = O-phospho-L-tyrosyl-[protein] + ADP + H(+). With respect to regulation, regulates splicing of its own pre-mRNA according to its kinase activity; increased expression of the catalytically active form influences splicing to generate the catalytically inactive splicing variant lacking the kinase domain. Leucettine L41 inhibits its kinase activity and affects the regulation of alternative splicing mediated by phosphorylation of SR proteins. Functionally, dual specificity kinase acting on both serine/threonine and tyrosine-containing substrates. Phosphorylates serine- and arginine-rich (SR) proteins of the spliceosomal complex and may be a constituent of a network of regulatory mechanisms that enable SR proteins to control RNA splicing. Phosphorylates: SRSF1, SRSF3 and PTPN1. Regulates the alternative splicing of tissue factor (F3) pre-mRNA in endothelial cells. The polypeptide is Dual specificity protein kinase CLK1 (Mus musculus (Mouse)).